Consider the following 144-residue polypeptide: Methylglyoxal synthase (144 aa).

The 144-residue stretch at 1–144 (MKIALIAHDE…KSGEEKETER (144 aa)) folds into the MGS-like domain. Residues histidine 8, lysine 12, 34 to 37 (TGTT), and 54 to 55 (SG) contribute to the substrate site. Catalysis depends on aspartate 60, which acts as the Proton donor/acceptor. Histidine 87 is a binding site for substrate.

Belongs to the methylglyoxal synthase family.

It carries out the reaction dihydroxyacetone phosphate = methylglyoxal + phosphate. In terms of biological role, catalyzes the formation of methylglyoxal from dihydroxyacetone phosphate. This chain is Methylglyoxal synthase, found in Geobacillus thermodenitrificans (strain NG80-2).